The chain runs to 271 residues: MWIDCRTIARSIEERTKERVEKLGFTPKLVSVACTDDPSTLSYLKSQRKKAEKLGIAFEILNVSPEEIVSTLKKLGSDESVNGVFVARPFPPSFDEKEILSSVPVEKDVEGVNPANLGLLLYDEEIFPPCTAEAAVRILERETNLSGKRVTVVGRSVTVGKPLALMLLKKGRDATVTVCHSRTVNLEEITKNSDIVVVAVGRAHFLKKNMVKEGAIVIDVGINYVDGKLQGDVDPSVEEIARVTPVPGGVGQVTTALLFEHVVRAAERQRK.

NADP(+) contacts are provided by residues glycine 154–serine 156, serine 181, and isoleucine 222.

This sequence belongs to the tetrahydrofolate dehydrogenase/cyclohydrolase family. As to quaternary structure, homodimer.

It catalyses the reaction (6R)-5,10-methylene-5,6,7,8-tetrahydrofolate + NADP(+) = (6R)-5,10-methenyltetrahydrofolate + NADPH. The enzyme catalyses (6R)-5,10-methenyltetrahydrofolate + H2O = (6R)-10-formyltetrahydrofolate + H(+). The protein operates within one-carbon metabolism; tetrahydrofolate interconversion. In terms of biological role, catalyzes the oxidation of 5,10-methylenetetrahydrofolate to 5,10-methenyltetrahydrofolate and then the hydrolysis of 5,10-methenyltetrahydrofolate to 10-formyltetrahydrofolate. This chain is Bifunctional protein FolD, found in Thermotoga petrophila (strain ATCC BAA-488 / DSM 13995 / JCM 10881 / RKU-1).